Reading from the N-terminus, the 521-residue chain is Bifunctional purine biosynthesis protein PurH (521 aa).

The MGS-like domain occupies 1–145 (MIKQALISVS…KNHRDVTVVV (145 aa)).

This sequence belongs to the PurH family.

It catalyses the reaction (6R)-10-formyltetrahydrofolate + 5-amino-1-(5-phospho-beta-D-ribosyl)imidazole-4-carboxamide = 5-formamido-1-(5-phospho-D-ribosyl)imidazole-4-carboxamide + (6S)-5,6,7,8-tetrahydrofolate. The enzyme catalyses IMP + H2O = 5-formamido-1-(5-phospho-D-ribosyl)imidazole-4-carboxamide. The protein operates within purine metabolism; IMP biosynthesis via de novo pathway; 5-formamido-1-(5-phospho-D-ribosyl)imidazole-4-carboxamide from 5-amino-1-(5-phospho-D-ribosyl)imidazole-4-carboxamide (10-formyl THF route): step 1/1. Its pathway is purine metabolism; IMP biosynthesis via de novo pathway; IMP from 5-formamido-1-(5-phospho-D-ribosyl)imidazole-4-carboxamide: step 1/1. This chain is Bifunctional purine biosynthesis protein PurH, found in Paraburkholderia phymatum (strain DSM 17167 / CIP 108236 / LMG 21445 / STM815) (Burkholderia phymatum).